The chain runs to 587 residues: MTADLPYEIWMNIIEYLGNDTINLLLVSKYLFFLATFCNISKKKLYKSIIKNGYIDILKYIRELTVNGEISAKIKMDKNLSMLLATKYGKLNIIKYLVRNGTDIRICNNYPVRKASKYGYLDIVKYLIREDCDVSDYDNYALRKATKNGYFEIVKLLVDQGADVHCCDNAPIKLACKYGYSKMVKFFHKKFLDVNYDFNEDLLLKLASSGGHYKIVKYLVTKSNNIHFEDSLISVIKKGHLDILKYFISKGVILGNNKNIRNATLMACKKGHYNVVEYLIDNIISIENMKKKYSCDIEIDIFKKNLITNTCISGNLDMLKYLISKGINVAFEDNLPIKISACHDHLHLVKYLVSISNVKINYENILISASENGCIKVVKYLVDKGVNVKDNTAIYSAGINGYLQIVKFLESNGADLIKYHNEIFLECSSNGYLNVIKYIVSKYNINKSIYDKALIIASKNNQLKTVKYLVHMGADIKSIKFHDMEKIIDNDLELLKYLVSKGLKINNIYKNLISKIIMNNDLDKLKYLISLGVNMKCIRIDTFNSCIQNRNKEMLSYLISRKIKLICYCEEGTEEDSEEDTEEDSEN.

ANK repeat units follow at residues 77–106, 108–136, 137–166, 168–196, 199–228, 230–256, 259–288, 302–331, 333–360, 361–390, 392–418, 420–448, 449–478, 480–507, 509–537, and 539–567; these read DKNL…DIRI, NNYP…DVSD, YDNY…DVHC, DNAP…DVNY, NEDL…NIHF, DSLI…ILGN, NIRN…SIEN, FKKN…NVAF, DNLP…NVKI, NYEN…NVKD, TAIY…DLIK, HNEI…INKS, IYDK…DIKS, KFHD…KINN, YKNL…NMKC, and RIDT…KLIC.

The polypeptide is Putative ankyrin repeat protein L66 (Acanthamoeba polyphaga mimivirus (APMV)).